The sequence spans 104 residues: Large ribosomal subunit protein uL24 (104 aa).

This sequence belongs to the universal ribosomal protein uL24 family. Part of the 50S ribosomal subunit.

In terms of biological role, one of two assembly initiator proteins, it binds directly to the 5'-end of the 23S rRNA, where it nucleates assembly of the 50S subunit. Its function is as follows. One of the proteins that surrounds the polypeptide exit tunnel on the outside of the subunit. The sequence is that of Large ribosomal subunit protein uL24 from Caulobacter vibrioides (strain ATCC 19089 / CIP 103742 / CB 15) (Caulobacter crescentus).